The primary structure comprises 258 residues: MSRRKMIYEGKAKILYEGPEPGTIVQYFKDDATAFNNQKKATLEGKGVLNNRISEHIMLGLGRIGIPTHFLKRLNMREQLVRQVEIIPLEVVCRNVAAGSISTRLGVPEGDQLPRSIVEFYYKKDELGDPMISEEHITAFNWATHQEIDDMMAMTLRVNDFLCGLFTGAGIRLVDFKLEFGRHYEGDMVRTVLADEISPDSCRLWDLETNEKMDKDRFRRDMGNVTEAYAEVARRLGIMKESGQGAANGDVGKGDAAK.

It belongs to the SAICAR synthetase family.

The catalysed reaction is 5-amino-1-(5-phospho-D-ribosyl)imidazole-4-carboxylate + L-aspartate + ATP = (2S)-2-[5-amino-1-(5-phospho-beta-D-ribosyl)imidazole-4-carboxamido]succinate + ADP + phosphate + 2 H(+). It participates in purine metabolism; IMP biosynthesis via de novo pathway; 5-amino-1-(5-phospho-D-ribosyl)imidazole-4-carboxamide from 5-amino-1-(5-phospho-D-ribosyl)imidazole-4-carboxylate: step 1/2. The polypeptide is Phosphoribosylaminoimidazole-succinocarboxamide synthase (Maricaulis maris (strain MCS10) (Caulobacter maris)).